Reading from the N-terminus, the 158-residue chain is Small ribosomal subunit protein uS7 (158 aa).

The protein belongs to the universal ribosomal protein uS7 family. As to quaternary structure, part of the 30S ribosomal subunit. Contacts proteins S9 and S11.

Functionally, one of the primary rRNA binding proteins, it binds directly to 16S rRNA where it nucleates assembly of the head domain of the 30S subunit. Is located at the subunit interface close to the decoding center, probably blocks exit of the E-site tRNA. In Phocaeicola vulgatus (strain ATCC 8482 / DSM 1447 / JCM 5826 / CCUG 4940 / NBRC 14291 / NCTC 11154) (Bacteroides vulgatus), this protein is Small ribosomal subunit protein uS7.